The primary structure comprises 906 residues: Pre-mRNA-splicing factor prp1 (906 aa).

Disordered regions lie at residues 50 to 129 (IEQR…VSSQ) and 142 to 164 (DEDW…KQPR). Over residues 108–124 (REKQEQLQKEKYEKENP) the composition is skewed to basic and acidic residues. Position 235 is a phosphoserine (Ser235). 11 HAT repeats span residues 258–290 (GDIR…LEEV), 322–353 (HPAA…KLEN), 354–384 (QAQH…NLEE), 385–416 (EVDN…LETY), 524–556 (KCID…LEKL), 558–590 (GTTE…ERKN), 592–624 (NDIA…IEFV), 693–725 (EQIE…LEEK), 726–758 (QSVI…MELR), 760–792 (GNIS…LEPR), and 824–856 (KKAD…YSLE).

Interacts with brr2 and spp42.

The protein resides in the nucleus. Its function is as follows. Involved in pre-mRNA splicing. Interacts with prp6 and prp13. May also be involved in the regulation of the G0-G1/G2 transition. Required for pre-spliceosome formation, which is the first step of pre-mRNA splicing. This protein is associated with snRNP U5. Has a role in branch site-3' splice site selection. Associates with the branch site-3' splice 3'-exon region. This is Pre-mRNA-splicing factor prp1 (prp1) from Schizosaccharomyces pombe (strain 972 / ATCC 24843) (Fission yeast).